The chain runs to 620 residues: Chaperone protein HscA homolog (620 aa).

Belongs to the heat shock protein 70 family.

Functionally, chaperone involved in the maturation of iron-sulfur cluster-containing proteins. Has a low intrinsic ATPase activity which is markedly stimulated by HscB. The polypeptide is Chaperone protein HscA homolog (Pseudomonas putida (strain ATCC 47054 / DSM 6125 / CFBP 8728 / NCIMB 11950 / KT2440)).